The chain runs to 426 residues: MPASAADLCEFINASPSPFHVCATVAGRLLDAGYAELSEVERWPDHPGRYFIVRAGSLVAWSAGQGVKAHAPFRIVGAHTDSPNLRVKQHPDLLVAGWRVVALQPYGGAWLNSWLDRDLGVSGRLSVRSAGKGSEITDRLVRIDDPILRVPQLAIHLAEDRKSLTLDPQRHVNAVWGVGDKAGSLLEYVAERTGVAVADVLAVDLMTHDLVPSMVIGADANLLSAPRLDNQVSCYAGMEALLASVPHDCLPVLALFDHEEVGSTSDRGARSNLLSTVLERIVLAAGGGRDDYLRRLPASLLVSADMAHATHPNYPECHEPSHLIEVNAGPVLKVHPNLRYATDGRTAAAFEVACQQAGVRLQRYEHRADRPCGSTIGPLASARTGIPTVDVGAAQLAMHSARELMGAHDVAVYSAALQAFFSADLF.

Positions 79, 156, and 399 each coordinate Zn(2+).

Belongs to the peptidase M18 family. Requires Zn(2+) as cofactor.

In Mycobacterium leprae (strain TN), this protein is Probable M18 family aminopeptidase 2 (apeB).